Here is a 638-residue protein sequence, read N- to C-terminus: Probable ATP-binding protein YheS (638 aa).

2 consecutive ABC transporter domains span residues 2–246 (IIFS…AQQT) and 313–531 (VMIE…STSE). Residues 34-41 (GKNGCGKS) and 349-356 (GKNGAGKS) each bind ATP. The segment at 525-563 (EQNSTSENKVSEKVGDNENSVQNRKEQKRREAELRQQTA) is disordered. Positions 547–558 (NRKEQKRREAEL) are enriched in basic and acidic residues.

The protein belongs to the ABC transporter superfamily. ABCF family. YheS subfamily.

Functionally, genetic data indicate it may be involved in ribosome assembly or function. This chain is Probable ATP-binding protein YheS, found in Haemophilus influenzae (strain ATCC 51907 / DSM 11121 / KW20 / Rd).